The primary structure comprises 315 residues: Methionyl-tRNA formyltransferase (315 aa).

113–116 lines the (6S)-5,6,7,8-tetrahydrofolate pocket; the sequence is SLLP.

The protein belongs to the Fmt family.

The catalysed reaction is L-methionyl-tRNA(fMet) + (6R)-10-formyltetrahydrofolate = N-formyl-L-methionyl-tRNA(fMet) + (6S)-5,6,7,8-tetrahydrofolate + H(+). Its function is as follows. Attaches a formyl group to the free amino group of methionyl-tRNA(fMet). The formyl group appears to play a dual role in the initiator identity of N-formylmethionyl-tRNA by promoting its recognition by IF2 and preventing the misappropriation of this tRNA by the elongation apparatus. The protein is Methionyl-tRNA formyltransferase of Escherichia coli O17:K52:H18 (strain UMN026 / ExPEC).